The primary structure comprises 375 residues: MSHNPVRPWRNVYRRKSRQIMVGNVPVGGDAPISVQTMTNTLTTDVAATVAQVQAAAEAGADIVRVSVPDEASARALREIVRESPVPIVADIHFHYRRGIEAAEAGAACLRINPGNIGSPDRVREVIRAARDHGCSIRIGVNAGSLEKHLLEKYGEPCPEAMVESGLEHIRILQDNDFHEYKISVKASDVFLSAAAYQGIAEATDAPIHLGITEAGGLVSGTIKSAIGLGNLLWMGIGDTIRVSLSADPVEEVKVGYEILKSLGLRHRGVNIISCPSCARQGFDVIKTVEALEKRLEHIKTPMSLSIIGCVVNGPGEALMTDVGFTGGGAGSGMVYLAGKASHKMSNERMIDHIVEEVEKKAAALDAASAAEAAE.

Residues Cys-275, Cys-278, Cys-310, and Glu-317 each coordinate [4Fe-4S] cluster.

The protein belongs to the IspG family. [4Fe-4S] cluster is required as a cofactor.

The catalysed reaction is (2E)-4-hydroxy-3-methylbut-2-enyl diphosphate + oxidized [flavodoxin] + H2O + 2 H(+) = 2-C-methyl-D-erythritol 2,4-cyclic diphosphate + reduced [flavodoxin]. It functions in the pathway isoprenoid biosynthesis; isopentenyl diphosphate biosynthesis via DXP pathway; isopentenyl diphosphate from 1-deoxy-D-xylulose 5-phosphate: step 5/6. Converts 2C-methyl-D-erythritol 2,4-cyclodiphosphate (ME-2,4cPP) into 1-hydroxy-2-methyl-2-(E)-butenyl 4-diphosphate. The sequence is that of 4-hydroxy-3-methylbut-2-en-1-yl diphosphate synthase (flavodoxin) from Ruegeria pomeroyi (strain ATCC 700808 / DSM 15171 / DSS-3) (Silicibacter pomeroyi).